A 583-amino-acid polypeptide reads, in one-letter code: Chromosomal replication initiator protein DnaA (583 aa).

A domain I, interacts with DnaA modulators region spans residues 1–91 (MSNSNFSIEE…KHVLKTRLDL (91 aa)). The interval 91-241 (LSVSLAITST…SFNDGLDGES (151 aa)) is domain II. Residues 151–239 (KAEQRDGASQ…SSSFNDGLDG (89 aa)) form a disordered region. Positions 172–182 (EAARRREHDAD) are enriched in basic and acidic residues. Residues 242–458 (LLNKNYTFEN…GALIRVTAYC (217 aa)) form a domain III, AAA+ region region. ATP contacts are provided by glycine 286, glycine 288, lysine 289, and threonine 290. Residues 459-583 (ALSHEPLTVE…TQKIKSHARD (125 aa)) are domain IV, binds dsDNA.

Belongs to the DnaA family. In terms of assembly, oligomerizes as a right-handed, spiral filament on DNA at oriC.

Its subcellular location is the cytoplasm. In terms of biological role, plays an essential role in the initiation and regulation of chromosomal replication. ATP-DnaA binds to the origin of replication (oriC) to initiate formation of the DNA replication initiation complex once per cell cycle. Binds the DnaA box (a 9 base pair repeat at the origin) and separates the double-stranded (ds)DNA. Forms a right-handed helical filament on oriC DNA; dsDNA binds to the exterior of the filament while single-stranded (ss)DNA is stabiized in the filament's interior. The ATP-DnaA-oriC complex binds and stabilizes one strand of the AT-rich DNA unwinding element (DUE), permitting loading of DNA polymerase. After initiation quickly degrades to an ADP-DnaA complex that is not apt for DNA replication. Binds acidic phospholipids. This chain is Chromosomal replication initiator protein DnaA, found in Corynebacterium jeikeium (strain K411).